Consider the following 379-residue polypeptide: MSAGSPKFTVRRIAALSLVSLWLAGCSDTSNPPAPVSSVNGNAPANTNSGMLITPPPKMGTTSTAQQPQIQPVQQPQIQATQQPQIQPVQPVAQQPVQMENGRIVYNRQYGNIPKGSYSGSTYTVKKGDTLFYIAWITGNDFRDLAQRNNIQAPYALNVGQTLQVGNASGTPITGGNAITQADAAEQGVVIKPAQNSTVAVASQPTITYSESSGEQSANKMLPNNKPTATTVTAPVTVPTASTTEPTVSSTSTSTPISTWRWPTEGKVIETFGASEGGNKGIDIAGSKGQAIIATADGRVVYAGNALRGYGNLIIIKHNDDYLSAYAHNDTMLVREQQEVKAGQKIATMGSTGTSSTRLHFEIRYKGKSVNPLRYLPQR.

An N-terminal signal peptide occupies residues 1-25 (MSAGSPKFTVRRIAALSLVSLWLAG). The N-palmitoyl cysteine moiety is linked to residue Cys-26. A lipid anchor (S-diacylglycerol cysteine) is attached at Cys-26. Residues 30–51 (SNPPAPVSSVNGNAPANTNSGM) show a composition bias toward polar residues. The tract at residues 30–67 (SNPPAPVSSVNGNAPANTNSGMLITPPPKMGTTSTAQQ) is disordered. The stretch at 66 to 73 (QQPQIQPV) is one 1-1 repeat. Positions 66–97 (QQPQIQPVQQPQIQATQQPQIQPVQPVAQQPV) are 4 X 8 AA tandem repeats of Q-Q-P-Q-I-Q-P-V. Residues 74-81 (QQPQIQAT) form a 1-2; approximate repeat. The stretch at 82 to 89 (QQPQIQPV) is one 1-3 repeat. A 1-4; approximate repeat occupies 90-97 (QPVAQQPV). The LysM domain occupies 121–165 (STYTVKKGDTLFYIAWITGNDFRDLAQRNNIQAPYALNVGQTLQV). 4 tandem repeats follow at residues 205-211 (PTITYSE), 227-233 (PTATTVT), 239-245 (PTASTTE), and 246-252 (PTVSSTS). The tract at residues 205–252 (PTITYSESSGEQSANKMLPNNKPTATTVTAPVTVPTASTTEPTVSSTS) is 4 X 7 AA approximate repeats. The span at 210–219 (SESSGEQSAN) shows a compositional bias: polar residues. 2 disordered regions span residues 210–231 (SESS…TATT) and 240–259 (TAST…PIST).

The protein belongs to the E.coli NlpD/Haemophilus LppB family.

The protein localises to the cell inner membrane. In terms of biological role, activator of the cell wall hydrolase AmiC. Required for septal murein cleavage and daughter cell separation during cell division. In Escherichia coli (strain K12), this protein is Murein hydrolase activator NlpD (nlpD).